Here is a 230-residue protein sequence, read N- to C-terminus: Urease accessory protein UreF (230 aa).

Belongs to the UreF family. UreD, UreF and UreG form a complex that acts as a GTP-hydrolysis-dependent molecular chaperone, activating the urease apoprotein by helping to assemble the nickel containing metallocenter of UreC. The UreE protein probably delivers the nickel.

The protein localises to the cytoplasm. In terms of biological role, required for maturation of urease via the functional incorporation of the urease nickel metallocenter. This chain is Urease accessory protein UreF, found in Cupriavidus pinatubonensis (strain JMP 134 / LMG 1197) (Cupriavidus necator (strain JMP 134)).